Here is a 163-residue protein sequence, read N- to C-terminus: Endoribonuclease YbeY (163 aa).

Histidine 129, histidine 133, and histidine 139 together coordinate Zn(2+).

Belongs to the endoribonuclease YbeY family. Zn(2+) serves as cofactor.

It localises to the cytoplasm. In terms of biological role, single strand-specific metallo-endoribonuclease involved in late-stage 70S ribosome quality control and in maturation of the 3' terminus of the 16S rRNA. In Picosynechococcus sp. (strain ATCC 27264 / PCC 7002 / PR-6) (Agmenellum quadruplicatum), this protein is Endoribonuclease YbeY.